The sequence spans 333 residues: Homocysteine S-methyltransferase 2 (333 aa).

The Hcy-binding domain occupies 8-327; the sequence is SMKDFLKQTG…TTIRAIHKRL (320 aa). 3 residues coordinate Zn(2+): cysteine 245, cysteine 312, and cysteine 313.

As to quaternary structure, monomer. It depends on Zn(2+) as a cofactor. Expressed predominantly in roots. Expressed in rosette leaves, cauline leaves and developing seeds.

It carries out the reaction S-methyl-L-methionine + L-homocysteine = 2 L-methionine + H(+). In terms of biological role, catalyzes methyl transfer from S-methylmethionine (SMM) to adenosyl-L-homocysteine (AdoMet). SMM degradation (by HMT-1, HMT-2 and HMT-3) and biosynthesis (by MMT1) constitute the SMM cycle in plants, which is probably required to achieve short term control of AdoMet level. In Arabidopsis thaliana (Mouse-ear cress), this protein is Homocysteine S-methyltransferase 2 (HMT-2).